Reading from the N-terminus, the 151-residue chain is Prefoldin subunit alpha (151 aa).

Belongs to the prefoldin subunit alpha family. As to quaternary structure, heterohexamer of two alpha and four beta subunits.

It is found in the cytoplasm. In terms of biological role, molecular chaperone capable of stabilizing a range of proteins. Seems to fulfill an ATP-independent, HSP70-like function in archaeal de novo protein folding. The chain is Prefoldin subunit alpha (pfdA) from Aeropyrum pernix (strain ATCC 700893 / DSM 11879 / JCM 9820 / NBRC 100138 / K1).